The chain runs to 377 residues: UPF0754 membrane protein lin2327 (377 aa).

The next 2 membrane-spanning stretches (helical) occupy residues 1-21 (MSVL…GAMT) and 357-377 (YLGG…AMWI).

It belongs to the UPF0754 family.

It localises to the cell membrane. This Listeria innocua serovar 6a (strain ATCC BAA-680 / CLIP 11262) protein is UPF0754 membrane protein lin2327.